A 732-amino-acid polypeptide reads, in one-letter code: Guanylate cyclase soluble subunit alpha-2 (732 aa).

The interval 1–58 (MSRRKISSESFSSLGSDYLETSPEEEGECPLSRLCWNGSRSPPGPLEPSPAAAAAAAA) is disordered. The segment covering 49-58 (SPAAAAAAAA) has biased composition (low complexity). Positions 521 to 648 (TMLFSDIVGF…NNVTLASKFE (128 aa)) constitute a Guanylate cyclase domain.

It belongs to the adenylyl cyclase class-4/guanylyl cyclase family. Heterodimer of an alpha and a beta chain. In terms of tissue distribution, isoform 1 is expressed in fetal brain, liver, colon, endothelium and testis. Isoform 2 is expressed only in liver, colon and endothelium.

The protein resides in the cytoplasm. It catalyses the reaction GTP = 3',5'-cyclic GMP + diphosphate. With respect to regulation, activated by nitric oxide in the presence of magnesium or manganese ions. Its function is as follows. Has guanylyl cyclase on binding to the beta-1 subunit. Functionally, isoform 2 acts as a negative regulator of guanylyl cyclase activity as it forms non-functional heterodimers with the beta subunits. The chain is Guanylate cyclase soluble subunit alpha-2 (GUCY1A2) from Homo sapiens (Human).